Consider the following 408-residue polypeptide: Glutamate N-acetyltransferase (408 aa).

Substrate-binding residues include Thr150, Lys176, Thr189, Glu271, Asn403, and Thr408. Thr189 serves as the catalytic Nucleophile.

This sequence belongs to the ArgJ family. In terms of assembly, heterotetramer of two alpha and two beta chains.

It is found in the cytoplasm. It carries out the reaction N(2)-acetyl-L-ornithine + L-glutamate = N-acetyl-L-glutamate + L-ornithine. It functions in the pathway amino-acid biosynthesis; L-arginine biosynthesis; L-ornithine and N-acetyl-L-glutamate from L-glutamate and N(2)-acetyl-L-ornithine (cyclic): step 1/1. Functionally, catalyzes the transfer of the acetyl group from N(2)-acetylornithine to glutamate, forming N-acetylglutamate and L-ornithine. The sequence is that of Glutamate N-acetyltransferase from Methanococcus maripaludis (strain C5 / ATCC BAA-1333).